A 344-amino-acid chain; its full sequence is Centromere protein N (344 aa).

The protein belongs to the CENP-N/CHL4 family.

Its subcellular location is the nucleus. The protein resides in the chromosome. It localises to the centromere. Functionally, probable component of a centromeric complex involved in assembly of kinetochore proteins, mitotic progression and chromosome segregation. In Gallus gallus (Chicken), this protein is Centromere protein N (CENPN).